A 246-amino-acid polypeptide reads, in one-letter code: Glutamate/aspartate import permease protein GltJ (246 aa).

In terms of domain architecture, ABC transmembrane type-1 spans 29–230; it reads FQVTIALSIC…LINAFIMLVM (202 aa). Helical transmembrane passes span 33–53, 74–94, 104–124, 179–196, and 212–232; these read IALS…FGIL, NVPL…LLPE, LDPN…FTAA, LVKN…DMAA, and FTAI…VMTL.

Belongs to the binding-protein-dependent transport system permease family. HisMQ subfamily. In terms of assembly, the complex is composed of two ATP-binding proteins (GltL), two transmembrane proteins (GltJ and GltK) and a solute-binding protein (GltI).

It localises to the cell inner membrane. In terms of biological role, part of the ABC transporter complex GltIJKL involved in glutamate and aspartate uptake. Probably responsible for the translocation of the substrate across the membrane. This Escherichia coli O6:H1 (strain CFT073 / ATCC 700928 / UPEC) protein is Glutamate/aspartate import permease protein GltJ (gltJ).